A 203-amino-acid polypeptide reads, in one-letter code: Endo-type membrane-bound lytic murein transglycosylase A (203 aa).

A signal peptide spans 1–15 (MKLRWFAFLIVLLAG). The N-palmitoyl cysteine moiety is linked to residue cysteine 16. A lipid anchor (S-diacylglycerol cysteine) is attached at cysteine 16.

It belongs to the transglycosylase Slt family.

The protein resides in the cell outer membrane. It catalyses the reaction Endolytic cleavage of the (1-&gt;4)-beta-glycosidic linkage between N-acetylmuramic acid (MurNAc) and N-acetylglucosamine (GlcNAc) residues in peptidoglycan with concomitant formation of a 1,6-anhydrobond in the MurNAc residue.. Murein-degrading enzyme. May play a role in recycling of muropeptides during cell elongation and/or cell division. Preferentially cleaves at a distance of more than two disaccharide units from the ends of the glycan chain. This Escherichia coli O127:H6 (strain E2348/69 / EPEC) protein is Endo-type membrane-bound lytic murein transglycosylase A.